Reading from the N-terminus, the 93-residue chain is Bacterial microcompartment shell protein PduA (93 aa).

The region spanning 5–89 (ALGMVETKGL…PHTDVEKILP (85 aa)) is the BMC domain.

This sequence belongs to the bacterial microcompartments protein family. Homohexamer with a central pore; Lys-26 and Arg-79 interactions are very important for hexamer symmetry. The hexamers pack against each other in arrays. Interacts individually with shell proteins PduB, PduB', PduJ, PduK, PduN and PduU. Modeling suggests PduC, PduD, PduE, PduL and PduP interact with a cleft formed by the C-terminal segments of 2 adjacent PduA subunits (on the BMC luminal side) in the hexamer.

It is found in the bacterial microcompartment. The protein operates within polyol metabolism; 1,2-propanediol degradation. Its function is as follows. One of the major shell proteins of the bacterial microcompartment (BMC) dedicated to 1,2-propanediol (1,2-PD) degradation, probably important for metabolite diffusion into and out of the BMC. Overexpression of a C-terminally mutated form (PduA*) makes thin parallel filaments with a honeycomb-like assembly in cross-section that probably form nanotubes. The filaments interfere with septation. PduA is probably the hub for binding multiple enzymes to the interior of the BMC. At least one of PduA or PduJ is required for BMC assembly; it must be encoded as the first gene in the pdu operon. Expression of a cosmid containing the full 21-gene pdu operon in E.coli allows E.coli to grow on 1,2-PD with the appearance of BMCs in its cytoplasm. Overexpression of this protein leads to aberrant intracellular filaments. Functionally, the 1,2-PD-specific bacterial microcompartment (BMC) concentrates low levels of 1,2-PD catabolic enzymes, concentrates volatile reaction intermediates thus enhancing pathway flux and keeps the level of toxic, mutagenic propionaldehyde low. The polypeptide is Bacterial microcompartment shell protein PduA (Citrobacter freundii).